Here is a 660-residue protein sequence, read N- to C-terminus: DNA topoisomerase I, plasmid (660 aa).

Residues 1 to 110 form the Toprim domain; it reads MKLMIIESPG…LRVTFNEITA (110 aa). Glu-7 and Asp-79 together coordinate Mg(2+). The Topo IA-type catalytic domain occupies 124–550; sequence DVKRVAAQEA…KVHDQLNMEL (427 aa). The interval 158 to 163 is interaction with DNA; that stretch reads SAGRVQ. Tyr-287 acts as the O-(5'-phospho-DNA)-tyrosine intermediate in catalysis. 2 consecutive C4-type zinc fingers follow at residues 563-589 and 613-643; these read CQEC…YPDC and CVKC…KEGC.

The protein belongs to the type IA topoisomerase family. In terms of assembly, monomer. The cofactor is Mg(2+).

It carries out the reaction ATP-independent breakage of single-stranded DNA, followed by passage and rejoining.. Its function is as follows. Releases the supercoiling and torsional tension of DNA, which is introduced during the DNA replication and transcription, by transiently cleaving and rejoining one strand of the DNA duplex. Introduces a single-strand break via transesterification at a target site in duplex DNA. The scissile phosphodiester is attacked by the catalytic tyrosine of the enzyme, resulting in the formation of a DNA-(5'-phosphotyrosyl)-enzyme intermediate and the expulsion of a 3'-OH DNA strand. The free DNA strand then undergoes passage around the unbroken strand, thus removing DNA supercoils. Finally, in the religation step, the DNA 3'-OH attacks the covalent intermediate to expel the active-site tyrosine and restore the DNA phosphodiester backbone. This is DNA topoisomerase I, plasmid from Xylella fastidiosa (strain 9a5c).